The primary structure comprises 349 residues: MKSTFGLLALAAAAKLVSAHATVHAVWINDVDQGAGNSADGYIRSPPNNSPITDVTSTDMTCNVNGKNPVAKTLSVKAGDKVTFEWHHDTRSDSDDIIASSHMGPVMVYMAPTEKGTAGNGWVKIAEEGYSNGKWAVANLIANRGKHSITVPDVPAGEYLLRPEIIALHEGNRQGGAQFYMECVQVKVTSAGTKTLPAGVSIPGAYKATDPGVLFDMYNSFTSYPIPGPAVWDGSSSGSSGSSGSSPATTTAPAVSVTAAPTKEAPVDTSATPTTFVTATKPATTAAPAAPSASSGSNSGSDSCNSGSASGSVKIYGQCGGQNYSGPTSCEAGLICKEWNPYYHQCVSA.

A signal peptide spans 1-19; that stretch reads MKSTFGLLALAAAAKLVSA. Cu(2+)-binding residues include histidine 20 and histidine 102. The cysteines at positions 62 and 183 are disulfide-linked. Position 169 (histidine 169) interacts with O2. Tyrosine 180 is a binding site for Cu(2+). Residues 233 to 304 form a disordered region; it reads DGSSSGSSGS…SGSNSGSDSC (72 aa). 2 stretches are compositionally biased toward low complexity: residues 234-262 and 269-304; these read GSSS…AAPT and TSAT…SDSC. One can recognise a CBM1 domain in the interval 311–347; sequence GSVKIYGQCGGQNYSGPTSCEAGLICKEWNPYYHQCV. Disulfide bonds link cysteine 319-cysteine 336 and cysteine 330-cysteine 346. Asparagine 323 is a glycosylation site (N-linked (GlcNAc...) asparagine).

It belongs to the polysaccharide monooxygenase AA9 family. The cofactor is Cu(2+).

It is found in the secreted. It carries out the reaction [(1-&gt;4)-beta-D-glucosyl]n+m + reduced acceptor + O2 = 4-dehydro-beta-D-glucosyl-[(1-&gt;4)-beta-D-glucosyl]n-1 + [(1-&gt;4)-beta-D-glucosyl]m + acceptor + H2O.. Lytic polysaccharide monooxygenase (LPMO) that depolymerizes crystalline and amorphous polysaccharides via the oxidation of scissile alpha- or beta-(1-4)-glycosidic bonds, yielding C4 oxidation products. Catalysis by LPMOs requires the reduction of the active-site copper from Cu(II) to Cu(I) by a reducing agent and H(2)O(2) or O(2) as a cosubstrate. Active on cellulose and cello-oligosaccharides, as well as plant cell wall-derived hemicellulosic polysaccharides. Also active on cello-oligosaccharides such as cellohexaose, cellopentaose or cellotetraose. The chain is AA9 family lytic polysaccharide monooxygenase C from Aspergillus fumigatus (strain ATCC MYA-4609 / CBS 101355 / FGSC A1100 / Af293) (Neosartorya fumigata).